A 393-amino-acid polypeptide reads, in one-letter code: Formate-dependent phosphoribosylglycinamide formyltransferase (393 aa).

Residues 22 to 23 (EL) and glutamate 82 contribute to the N(1)-(5-phospho-beta-D-ribosyl)glycinamide site. ATP is bound by residues arginine 114, lysine 155, 160–165 (SSGHGQ), 195–198 (EGFV), and glutamate 203. The ATP-grasp domain occupies 119 to 308 (RLAAEELGLP…EFALHARAIL (190 aa)). Mg(2+) contacts are provided by glutamate 267 and glutamate 279. N(1)-(5-phospho-beta-D-ribosyl)glycinamide is bound by residues aspartate 286, lysine 356, and 363 to 364 (RR).

The protein belongs to the PurK/PurT family. In terms of assembly, homodimer.

The enzyme catalyses N(1)-(5-phospho-beta-D-ribosyl)glycinamide + formate + ATP = N(2)-formyl-N(1)-(5-phospho-beta-D-ribosyl)glycinamide + ADP + phosphate + H(+). It participates in purine metabolism; IMP biosynthesis via de novo pathway; N(2)-formyl-N(1)-(5-phospho-D-ribosyl)glycinamide from N(1)-(5-phospho-D-ribosyl)glycinamide (formate route): step 1/1. Involved in the de novo purine biosynthesis. Catalyzes the transfer of formate to 5-phospho-ribosyl-glycinamide (GAR), producing 5-phospho-ribosyl-N-formylglycinamide (FGAR). Formate is provided by PurU via hydrolysis of 10-formyl-tetrahydrofolate. This is Formate-dependent phosphoribosylglycinamide formyltransferase from Pasteurella multocida (strain Pm70).